A 482-amino-acid polypeptide reads, in one-letter code: Auxin transporter-like protein 2 (482 aa).

At 1-58 (MVPAGDQAEEAIVADAGKEEAEVRAAMGVEQDGKFSMTSLLWHGGSVWDAWFSCASNQ) the chain is on the cytoplasmic side. A helical transmembrane segment spans residues 59–76 (VAQVLLTLPYSFSQLGML). The Extracellular segment spans residues 77 to 78 (SG). Residues 79-99 (LLLQVFYGLMGSWTAYLISVL) traverse the membrane as a helical segment. The Cytoplasmic segment spans residues 100-134 (YVEYRARKEKEGVSFKNHVIQWFEVLDGLLGPYWK). The chain crosses the membrane as a helical span at residues 135–155 (AAGLAFNCTFLLFGSVIQLIA). The Extracellular segment spans residues 156–171 (CASNIYYINDRLDKRT). A helical transmembrane segment spans residues 172 to 192 (WTYIFGACCSTTVFIPSFHNY). Arg193 is a topological domain (cytoplasmic). A helical membrane pass occupies residues 194–214 (IWSFLGLGMTTYTAWYLAIAA). Residues 215-231 (AVHGQVDGVTHSGPSKM) are Extracellular-facing. A helical transmembrane segment spans residues 232–252 (VLYFTGATNILYTFGGHAVTV). Topologically, residues 253–265 (EIMHAMWKPQKFK) are cytoplasmic. Residues 266 to 286 (YIYLVATLYVFTLTLPSASAM) traverse the membrane as a helical segment. The Extracellular segment spans residues 287–313 (YWAFGDALLTHSNAFSLLPRSGWRDAA). The chain crosses the membrane as a helical span at residues 314 to 334 (VILMLIHQFITFGFACTPLYF). The Cytoplasmic segment spans residues 335–355 (VWEKAIGMHGTRSVLTRALAR). A helical transmembrane segment spans residues 356-376 (LPIVVPIWFLAIIFPFFGPIN). Residue Ser377 is a topological domain, extracellular. A helical transmembrane segment spans residues 378-398 (AVGALLVSFTVYIIPSLSHIL). The Cytoplasmic segment spans residues 399-423 (TYRSASARLNAAEKPPPFLPSWSGM). The chain crosses the membrane as a helical span at residues 424–444 (FVVNVFVVAWVLVVGFGLGGW). Topologically, residues 445 to 482 (ASVTNFIKQIDTFGLFAKCYQCPPRAHAGAPLPAPPRH) are extracellular.

Belongs to the amino acid/polyamine transporter 2 family. Amino acid/auxin permease (AAAP) (TC 2.A.18.1) subfamily.

The protein resides in the cell membrane. Functionally, carrier protein involved in proton-driven auxin influx. May mediate the formation of auxin gradient from developing leaves (site of auxin biosynthesis) to tips. The chain is Auxin transporter-like protein 2 from Oryza sativa subsp. japonica (Rice).